Reading from the N-terminus, the 121-residue chain is MMTLSPFLLLLIAAVVIGNASEGEVKNEFEERLKDEFKDPSRSEVAEVILLRELEVLEETLFGKEMTSDTEENRNSREKRCMGYDIECNENLPCCKHRKLECVETSGYWWYKRKYCRPIKG.

An N-terminal signal peptide occupies residues 1-20 (MMTLSPFLLLLIAAVVIGNA). The propeptide occupies 21–80 (SEGEVKNEFEERLKDEFKDPSRSEVAEVILLRELEVLEETLFGKEMTSDTEENRNSREKR). 3 disulfides stabilise this stretch: cysteine 81-cysteine 95, cysteine 88-cysteine 102, and cysteine 94-cysteine 116. Position 120 is a lysine amide (lysine 120).

The protein belongs to the neurotoxin 14 (magi-1) family. 09 (magi-1) subfamily. As to expression, expressed by the venom gland.

It is found in the secreted. Insecticidal neurotoxin. Shows competition for site 3 of insect voltage-gated sodium channels (Nav). Induces flaccid paralysis when injected into lepidopteran larvae. Is not toxic to mice when injected intracranially at 20 pmol/g. The protein is Mu-hexatoxin-Mg1a of Macrothele gigas (Japanese funnel web spider).